Reading from the N-terminus, the 335-residue chain is Ornithine carbamoyltransferase 2, catabolic (335 aa).

Carbamoyl phosphate is bound by residues 62–65 (STRT), Q89, R113, and 140–143 (HPTQ). Residues N172, D236, and 240 to 241 (SM) each bind L-ornithine. Carbamoyl phosphate-binding positions include 277–278 (CL) and R322.

It belongs to the aspartate/ornithine carbamoyltransferase superfamily. OTCase family.

It is found in the cytoplasm. It catalyses the reaction carbamoyl phosphate + L-ornithine = L-citrulline + phosphate + H(+). Its pathway is amino-acid degradation; L-arginine degradation via ADI pathway; carbamoyl phosphate from L-arginine: step 2/2. Reversibly catalyzes the transfer of the carbamoyl group from carbamoyl phosphate (CP) to the N(epsilon) atom of ornithine (ORN) to produce L-citrulline. The protein is Ornithine carbamoyltransferase 2, catabolic (arcB2) of Staphylococcus epidermidis (strain ATCC 12228 / FDA PCI 1200).